Here is a 390-residue protein sequence, read N- to C-terminus: S-adenosylmethionine synthase 2 (390 aa).

Glu-9 serves as a coordination point for Mg(2+). An ATP-binding site is contributed by His-15. Glu-43 contributes to the K(+) binding site. L-methionine contacts are provided by Glu-56 and Gln-99. Residues Asp-167 to Lys-169, Ser-235 to Phe-238, Asp-246, Arg-252 to Lys-253, Ala-269, Lys-273, and Lys-277 contribute to the ATP site. Asp-246 is a binding site for L-methionine. Lys-277 contacts L-methionine.

Belongs to the AdoMet synthase family. Homotetramer. Mn(2+) is required as a cofactor. The cofactor is Mg(2+). It depends on Co(2+) as a cofactor. Requires K(+) as cofactor.

Its subcellular location is the cytoplasm. It catalyses the reaction L-methionine + ATP + H2O = S-adenosyl-L-methionine + phosphate + diphosphate. Its pathway is amino-acid biosynthesis; S-adenosyl-L-methionine biosynthesis; S-adenosyl-L-methionine from L-methionine: step 1/1. Catalyzes the formation of S-adenosylmethionine from methionine and ATP. The reaction comprises two steps that are both catalyzed by the same enzyme: formation of S-adenosylmethionine (AdoMet) and triphosphate, and subsequent hydrolysis of the triphosphate. The protein is S-adenosylmethionine synthase 2 (METK2) of Solanum tuberosum (Potato).